The following is an 88-amino-acid chain: MASQVVLSFALVVVLAVFVGQVDSCPSDCKCDYRSSQCRPANDDVHPNVCIDHYCVVMNLAKREQRPELSPGAWDDSSEEKDNEASLA.

The first 24 residues, 1–24, serve as a signal peptide directing secretion; sequence MASQVVLSFALVVVLAVFVGQVDS. Residues 66–88 are disordered; sequence RPELSPGAWDDSSEEKDNEASLA. The propeptide occupies 79-88; sequence EEKDNEASLA.

Belongs to the scoloptoxin-XY family. Post-translationally, contains 3 disulfide bonds. Expressed by the venom gland.

The protein localises to the secreted. In Ethmostigmus rubripes (Giant centipede), this protein is U-scoloptoxin(XY)-Er1a.